The primary structure comprises 543 residues: Hydroxylamine reductase (543 aa).

Residues Cys5, Cys8, Cys17, and Cys23 each coordinate [4Fe-4S] cluster. Hybrid [4Fe-2O-2S] cluster is bound by residues His236, Glu260, Cys304, Cys398, Cys426, Cys451, Glu486, and Lys488. Cys398 is subject to Cysteine persulfide.

The protein belongs to the HCP family. [4Fe-4S] cluster is required as a cofactor. Hybrid [4Fe-2O-2S] cluster serves as cofactor.

The protein localises to the cytoplasm. It catalyses the reaction A + NH4(+) + H2O = hydroxylamine + AH2 + H(+). Catalyzes the reduction of hydroxylamine to form NH(3) and H(2)O. In Bacteroides thetaiotaomicron (strain ATCC 29148 / DSM 2079 / JCM 5827 / CCUG 10774 / NCTC 10582 / VPI-5482 / E50), this protein is Hydroxylamine reductase.